The following is a 632-amino-acid chain: 2-hydroxyacyl-CoA lyase 2 (632 aa).

Residues phenylalanine 13 to alanine 33 traverse the membrane as a helical segment. Residue glutamate 98 participates in thiamine diphosphate binding. Phosphoserine is present on serine 369. Positions aspartate 470–glycine 550 are thiamine pyrophosphate binding. Mg(2+) contacts are provided by aspartate 521 and asparagine 547.

Belongs to the TPP enzyme family. Mg(2+) serves as cofactor. Requires thiamine diphosphate as cofactor.

It localises to the endoplasmic reticulum membrane. It catalyses the reaction 2-hydroxyoctadecanoyl-CoA = heptadecanal + formyl-CoA. The catalysed reaction is (2R)-hydroxyhexadecanoyl-CoA = pentadecanal + formyl-CoA. In terms of biological role, endoplasmic reticulum 2-OH acyl-CoA lyase involved in the cleavage (C1 removal) reaction in the fatty acid alpha-oxydation in a thiamine pyrophosphate (TPP)-dependent manner. Involved in the phytosphingosine degradation pathway. This is 2-hydroxyacyl-CoA lyase 2 (Ilvbl) from Mus musculus (Mouse).